The chain runs to 215 residues: Ankyrin repeat domain-containing protein 49 (215 aa).

ANK repeat units lie at residues 81–110 (DGYT…NPNA) and 114–143 (LGWT…DVNA).

Interacts with Bdbt; interaction promotes the stability of both complex members.

The protein localises to the cytoplasm. Its subcellular location is the cytosol. It is found in the cell membrane. In terms of biological role, required for regulating the establishment of planar cell polarity in the wing. Forms a complex with Bdbt which likely functions in the regulation of planar polarity by promoting the activity of Dco during planar polarity establishment. Within the complex, probably functions to stabilize Bdbt, while Bdbt directly promotes Dco activity in regulating phosphorylation of core proteins such as dsh, and asymmetric localization. This Drosophila melanogaster (Fruit fly) protein is Ankyrin repeat domain-containing protein 49.